An 89-amino-acid chain; its full sequence is Exodeoxyribonuclease 7 small subunit (89 aa).

The tract at residues Met1–Glu22 is disordered.

It belongs to the XseB family. In terms of assembly, heterooligomer composed of large and small subunits.

Its subcellular location is the cytoplasm. It carries out the reaction Exonucleolytic cleavage in either 5'- to 3'- or 3'- to 5'-direction to yield nucleoside 5'-phosphates.. Its function is as follows. Bidirectionally degrades single-stranded DNA into large acid-insoluble oligonucleotides, which are then degraded further into small acid-soluble oligonucleotides. The sequence is that of Exodeoxyribonuclease 7 small subunit from Nitrosomonas europaea (strain ATCC 19718 / CIP 103999 / KCTC 2705 / NBRC 14298).